The sequence spans 364 residues: Aminomethyltransferase (364 aa).

It belongs to the GcvT family. The glycine cleavage system is composed of four proteins: P, T, L and H.

It carries out the reaction N(6)-[(R)-S(8)-aminomethyldihydrolipoyl]-L-lysyl-[protein] + (6S)-5,6,7,8-tetrahydrofolate = N(6)-[(R)-dihydrolipoyl]-L-lysyl-[protein] + (6R)-5,10-methylene-5,6,7,8-tetrahydrofolate + NH4(+). Functionally, the glycine cleavage system catalyzes the degradation of glycine. This chain is Aminomethyltransferase, found in Thermotoga sp. (strain RQ2).